The primary structure comprises 311 residues: CARD domain-containing protein E10 (311 aa).

The 90-residue stretch at 21-110 (IWDVERLCLE…EHLVDLLERA (90 aa)) folds into the CARD domain. Disordered regions lie at residues 125–181 (ESGA…GGVY), 203–230 (GAGRGGSLLSGGHGGHPPHGGPGGGGRD), and 243–311 (IPEP…FFCC). Residues 140–152 (EDNSGYTALLPTN) are compositionally biased toward polar residues. The span at 252 to 272 (SGGGGRGGGVRYDAGGDGRLG) shows a compositional bias: gly residues.

The protein localises to the host cell membrane. Activates host NF-kappa-B and JNK pathways. Induces hyperphosphorylation and redistribution of host bcl-10 from the cytoplasm to the plasma membrane. The inhibitory effect of cellular bcl-10 on NF-kappa-B pathway is then overcome allowing NF-kappa-B activation. This chain is CARD domain-containing protein E10 (E10), found in Equus caballus (Horse).